Reading from the N-terminus, the 110-residue chain is Histone H2A.1 (110 aa).

It belongs to the histone H2A family. The nucleosome is a histone octamer containing two molecules each of H2A, H2B, H3 and H4 assembled in one H3-H4 heterotetramer and two H2A-H2B heterodimers. The octamer wraps approximately 147 bp of DNA. Expressed in the generative cell within the bicellular pollen. Not detected in other reproductive or vegetative tissues.

It is found in the nucleus. The protein resides in the chromosome. In terms of biological role, core component of nucleosome. Nucleosomes wrap and compact DNA into chromatin, limiting DNA accessibility to the cellular machineries which require DNA as a template. Histones thereby play a central role in transcription regulation, DNA repair, DNA replication and chromosomal stability. DNA accessibility is regulated via a complex set of post-translational modifications of histones, also called histone code, and nucleosome remodeling. This chain is Histone H2A.1 (gcH2A), found in Lilium longiflorum (Trumpet lily).